Here is a 493-residue protein sequence, read N- to C-terminus: Glutamyl-tRNA(Gln) amidotransferase subunit A (493 aa).

Residues lysine 78 and serine 158 each act as charge relay system in the active site. Serine 182 functions as the Acyl-ester intermediate in the catalytic mechanism.

It belongs to the amidase family. GatA subfamily. Heterotrimer of A, B and C subunits.

It catalyses the reaction L-glutamyl-tRNA(Gln) + L-glutamine + ATP + H2O = L-glutaminyl-tRNA(Gln) + L-glutamate + ADP + phosphate + H(+). In terms of biological role, allows the formation of correctly charged Gln-tRNA(Gln) through the transamidation of misacylated Glu-tRNA(Gln) in organisms which lack glutaminyl-tRNA synthetase. The reaction takes place in the presence of glutamine and ATP through an activated gamma-phospho-Glu-tRNA(Gln). This Methylorubrum extorquens (strain CM4 / NCIMB 13688) (Methylobacterium extorquens) protein is Glutamyl-tRNA(Gln) amidotransferase subunit A.